Here is a 152-residue protein sequence, read N- to C-terminus: SKP1-like protein 10 (152 aa).

Residues 94–152 are interaction with the F-box domain of F-box proteins; the sequence is IMAANYLNIKSLLDLACQTVADMIKDNTVEHTRKFFNIENDYTHEEEEAVRRENQWGFE.

Belongs to the SKP1 family. As to quaternary structure, part of a SCF (SKP1-cullin-F-box) protein ligase complex. Interacts with CPR1/CPR30. As to expression, expressed in young seedlings, roots, leaves, floral stems, inflorescences, and siliques.

It is found in the nucleus. Its pathway is protein modification; protein ubiquitination. Involved in ubiquitination and subsequent proteasomal degradation of target proteins. Together with CUL1, RBX1 and a F-box protein, it forms a SCF E3 ubiquitin ligase complex. The functional specificity of this complex depends on the type of F-box protein. In the SCF complex, it serves as an adapter that links the F-box protein to CUL1. In Arabidopsis thaliana (Mouse-ear cress), this protein is SKP1-like protein 10 (ASK10).